Here is a 302-residue protein sequence, read N- to C-terminus: Probable 2-(5''-triphosphoribosyl)-3'-dephosphocoenzyme-A synthase (302 aa).

It belongs to the CitG/MdcB family.

It carries out the reaction 3'-dephospho-CoA + ATP = 2'-(5''-triphospho-alpha-D-ribosyl)-3'-dephospho-CoA + adenine. In Salmonella gallinarum (strain 287/91 / NCTC 13346), this protein is Probable 2-(5''-triphosphoribosyl)-3'-dephosphocoenzyme-A synthase.